The following is a 187-amino-acid chain: dCTP deaminase (187 aa).

DCTP is bound by residues 110–115, 134–136, Q155, Y169, and Q179; these read KSTYAR and TLE. E136 acts as the Proton donor/acceptor in catalysis.

It belongs to the dCTP deaminase family. In terms of assembly, homotrimer.

The enzyme catalyses dCTP + H2O + H(+) = dUTP + NH4(+). It functions in the pathway pyrimidine metabolism; dUMP biosynthesis; dUMP from dCTP (dUTP route): step 1/2. Functionally, catalyzes the deamination of dCTP to dUTP. The protein is dCTP deaminase of Bordetella pertussis (strain Tohama I / ATCC BAA-589 / NCTC 13251).